Here is a 357-residue protein sequence, read N- to C-terminus: Red-sensitive opsin-1 (357 aa).

Residues 1–49 lie on the Extracellular side of the membrane; it reads MAEHWGDAIYAARRKGDETTREAMFTYTNSNNTKDPFEGPNYHIAPRWV. The N-linked (GlcNAc...) asparagine glycan is linked to asparagine 31. The chain crosses the membrane as a helical span at residues 50-74; it reads YNVATVWMFFVVVASTFTNGLVLVA. At 75–86 the chain is on the cytoplasmic side; it reads TAKFKKLRHPLN. A helical membrane pass occupies residues 87-112; the sequence is WILVNLAIADLGETLFASTISVINQF. At 113 to 126 the chain is on the extracellular side; that stretch reads FGYFILGHPMCIFE. Cysteines 123 and 200 form a disulfide. A helical transmembrane segment spans residues 127-146; that stretch reads GYTVSVCGIAALWSLTVISW. Residues 147–165 are Cytoplasmic-facing; it reads ERWVVVCKPFGNVKFDAKW. A helical membrane pass occupies residues 166-189; it reads ASAGIIFSWVWAAAWCAPPIFGWS. Residues 190–215 lie on the Extracellular side of the membrane; it reads RYWPHGLKTSCGPDVFSGSEDPGVQS. Residues 216–243 form a helical membrane-spanning segment; sequence YMVVLMITCCIIPLAIIILCYIAVYLAI. The Cytoplasmic portion of the chain corresponds to 244-265; that stretch reads HAVAQQQKDSESTQKAEKEVSR. The chain crosses the membrane as a helical span at residues 266 to 289; it reads MVVVMIFAYCFCWGPYTFFACFAA. Over 290 to 297 the chain is Extracellular; sequence ANPGYAFH. Residues 298–322 traverse the membrane as a helical segment; it reads PLAAAMPAYFAKSATIYNPVIYVFM. Position 309 is an N6-(retinylidene)lysine (lysine 309). Over 323-357 the chain is Cytoplasmic; sequence NRQFRVCIMQLFGKKVDDGSEVSTSKTEVSSVAPA.

This sequence belongs to the G-protein coupled receptor 1 family. Opsin subfamily. In terms of processing, phosphorylated on some or all of the serine and threonine residues present in the C-terminal region. As to expression, retinal double cone principal photoreceptor cell outer segments.

Its subcellular location is the membrane. Its function is as follows. Visual pigments are the light-absorbing molecules that mediate vision. They consist of an apoprotein, opsin, covalently linked to cis-retinal. This Danio rerio (Zebrafish) protein is Red-sensitive opsin-1 (opn1lw1).